A 298-amino-acid polypeptide reads, in one-letter code: S-adenosylmethionine-dependent nucleotide dehydratase (298 aa).

Positions 8-235 constitute a Radical SAM core domain; the sequence is ANKELVVNWH…QRFGEIIYAE (228 aa). [4Fe-4S] cluster is bound by residues C22, C26, and C29.

The protein belongs to the radical SAM superfamily. Viperin family. [4Fe-4S] cluster is required as a cofactor.

The enzyme catalyses CTP + AH2 + S-adenosyl-L-methionine = 3'-deoxy-3',4'-didehydro-CTP + 5'-deoxyadenosine + L-methionine + A + H2O + H(+). The catalysed reaction is UTP + AH2 + S-adenosyl-L-methionine = 3'-deoxy-3',4'-didehydro-UTP + 5'-deoxyadenosine + L-methionine + A + H2O + H(+). Expression of pVip8 in E.coli (strain MG1655) confers resistance to phages lambda, P1, SECphi8 and T7. Prevents culture collapse upon infection with T7. Catalyzes the conversion of cytidine triphosphate (CTP) to 3'-deoxy-3',4'-didehydro-CTP (ddhCTP) and uridine triphosphate (UTP) to 3'-deoxy-3',4'-didehydro-UTP (ddhUTP), probably via a SAM-dependent radical mechanism. The modified nucleotides repress transcription from T7 RNA polymerase-directed genes (possibly by acting as chain terminators), strongly suggesting these nucleotides block viral polymerase transcription. The protein is S-adenosylmethionine-dependent nucleotide dehydratase of Psychrobacter lutiphocae (strain DSM 21542 / CCUG 56590 / IMMIB L-1110).